Reading from the N-terminus, the 1128-residue chain is DNA-directed RNA polymerase subunit Rpo2 (1128 aa).

Residues Lys-178, Ser-181–Asn-182, Lys-206, Arg-435–Asn-439, and Arg-1027–Glu-1032 contribute to the dsDNA site. Residues Cys-1061, Cys-1064, Cys-1079, and His-1082 each contribute to the Zn(2+) site.

It belongs to the RNA polymerase beta chain family. As to quaternary structure, part of the 13-subunit RNA polymerase complex. Zn(2+) serves as cofactor.

It is found in the cytoplasm. The enzyme catalyses RNA(n) + a ribonucleoside 5'-triphosphate = RNA(n+1) + diphosphate. DNA-dependent RNA polymerase (RNAP) catalyzes the transcription of DNA into RNA using the four ribonucleoside triphosphates as substrates. This subunit is involved in DNA promoter recognition. The sequence is that of DNA-directed RNA polymerase subunit Rpo2 from Saccharolobus shibatae (strain ATCC 51178 / DSM 5389 / JCM 8931 / NBRC 15437 / B12) (Sulfolobus shibatae).